Reading from the N-terminus, the 468-residue chain is Mothers against decapentaplegic homolog 1 (468 aa).

M1 bears the N-acetylmethionine mark. Residues 12-136 (PAVKRLLGWK…YKRVESPVLP (125 aa)) enclose the MH1 domain. The Zn(2+) site is built by C64, C109, C121, and H126. Residues 162–246 (NEPHMPLNAT…DGSQPMDTNM (85 aa)) form a disordered region. The segment covering 188 to 210 (PNSSYPNSPGSSSSTYPHSPTSS) has biased composition (low complexity). Residues 221–232 (DTPPPAYLPPED) are compositionally biased toward pro residues. The span at 237–246 (DGSQPMDTNM) shows a compositional bias: polar residues. The 195-residue stretch at 274 to 468 (WCSIVYYELN…SPHNPISSVS (195 aa)) folds into the MH2 domain. Position 325 is a phosphothreonine; by MINK1, TNIK and MAP4K4 (T325). Positions 421 to 431 (KGWGAEYHRQD) are L3 loop. A phosphoserine mark is found at S466 and S468.

This sequence belongs to the dwarfin/SMAD family. As to quaternary structure, found in a complex with SMAD4 and YY1. Interacts with HGS, NANOG and ZCCHC12. Upon C-terminus phosphorylation: forms trimers with another SMAD1 and the co-SMAD SMAD4. Interacts with PEBP2-alpha subunit, CREB-binding protein (CBP), p300, SMURF1, SMURF2, USP15 and HOXC8. Associates with ZNF423 or ZNF521 in response to BMP2 leading to activate transcription of BMP target genes. Interacts with SKOR1. Interacts (via MH2 domain) with LEMD3. Binding to LEMD3 results in at least a partial reduction of receptor-mediated phosphorylation. Forms a ternary complex with PSMB4 and OAZ1 before PSMB4 is incorporated into the 20S proteasome. Interacts (via MH2 domain) with FAM83G (via MH2 domain); in a SMAD4-independent manner. Interacts with ZC3H3. Interacts with TMEM119. Interacts (via MH1 and MH2 domains) with ZNF8. Interacts with RANBP3L; the interaction increases when SMAD1 is not phosphorylated and mediates SMAD1 nuclear export. Interacts with EGR1; this interaction inhibits SMAD1 dephosphorylation. Interacts with SMAD6. Interacts with YAP1. Interacts with MTMR4; negatively regulates BMP signaling through SMAD1 dephosphorylation and retention in endosomes. In terms of processing, phosphorylation of the C-terminal SVS motif by BMP type 1 receptor kinase activates SMAD1 by promoting dissociation from the receptor and trimerization with SMAD4. Phosphorylation by ERK2 MAP kinase in response to EGF or HGF prevents SMAD1 nuclear accumulation and transcriptional activity in response to BMP. Dephosphorylation, probably by PPM1A, induces its export from the nucleus to the cytoplasm. Dephosphorylation is inhibited by association with EGR1. Phosphorylation by CDK8/9 creates binding sites for YAP1, and subsequent phosphorylation by GSK3 switches off YAP1 binding and adds binding sites for SMURF1. Ubiquitinated by SMAD-specific E3 ubiquitin ligase SMURF1, leading to its degradation. Monoubiquitinated, leading to prevent DNA-binding. Deubiquitination by USP15 alleviates inhibition and promotes activation of TGF-beta target genes. Dephosphorylation, probably by PPM1A, induces its export from the nucleus to the cytoplasm. Phospho-SMAD1 is ubiquitinated by CHIP leading to disruption of the SMAD1-SMAD4 complex. Ubiquitous; present in liver, lung, stomach and spleen with lower level in heart, testes and skeletal muscle.

The protein localises to the cytoplasm. The protein resides in the nucleus. Functionally, transcriptional modulator that plays a role in various cellular processes, including embryonic development, cell differentiation, and tissue homeostasis. Upon BMP ligand binding to their receptors at the cell surface, is phosphorylated by activated type I BMP receptors (BMPRIs) and associates with SMAD4 to form an heteromeric complex which translocates into the nucleus acting as transcription factor. In turn, the hetero-trimeric complex recognizes cis-regulatory elements containing Smad Binding Elements (SBEs) to modulate the outcome of the signaling network. SMAD1/OAZ1/PSMB4 complex mediates the degradation of the CREBBP/EP300 repressor SNIP1. Positively regulates BMP4-induced expression of odontogenic development regulator MSX1 following IPO7-mediated nuclear import. This Rattus norvegicus (Rat) protein is Mothers against decapentaplegic homolog 1 (Smad1).